The sequence spans 218 residues: Holliday junction branch migration complex subunit RuvA (218 aa).

Residues 1 to 64 form a domain I region; the sequence is MIGKITGRLE…EDVMQLFGFT (64 aa). The interval 65–143 is domain II; that stretch reads TLTEKEWHRL…SVMGMSDTQA (79 aa). Positions 144–164 are flexible linker; sequence TVAAQSSDAVIETRAAPSPVV. The tract at residues 165-218 is domain III; the sequence is QNPSAQAEALSALSNLGYAPGDAAAAVAQAAGELPDAETPDLIRAALKRLAPKG.

This sequence belongs to the RuvA family. In terms of assembly, homotetramer. Forms an RuvA(8)-RuvB(12)-Holliday junction (HJ) complex. HJ DNA is sandwiched between 2 RuvA tetramers; dsDNA enters through RuvA and exits via RuvB. An RuvB hexamer assembles on each DNA strand where it exits the tetramer. Each RuvB hexamer is contacted by two RuvA subunits (via domain III) on 2 adjacent RuvB subunits; this complex drives branch migration. In the full resolvosome a probable DNA-RuvA(4)-RuvB(12)-RuvC(2) complex forms which resolves the HJ.

Its subcellular location is the cytoplasm. Its function is as follows. The RuvA-RuvB-RuvC complex processes Holliday junction (HJ) DNA during genetic recombination and DNA repair, while the RuvA-RuvB complex plays an important role in the rescue of blocked DNA replication forks via replication fork reversal (RFR). RuvA specifically binds to HJ cruciform DNA, conferring on it an open structure. The RuvB hexamer acts as an ATP-dependent pump, pulling dsDNA into and through the RuvAB complex. HJ branch migration allows RuvC to scan DNA until it finds its consensus sequence, where it cleaves and resolves the cruciform DNA. In Roseobacter denitrificans (strain ATCC 33942 / OCh 114) (Erythrobacter sp. (strain OCh 114)), this protein is Holliday junction branch migration complex subunit RuvA.